The primary structure comprises 250 residues: 3-deoxy-manno-octulosonate cytidylyltransferase (250 aa).

Belongs to the KdsB family.

The protein localises to the cytoplasm. It catalyses the reaction 3-deoxy-alpha-D-manno-oct-2-ulosonate + CTP = CMP-3-deoxy-beta-D-manno-octulosonate + diphosphate. Its pathway is nucleotide-sugar biosynthesis; CMP-3-deoxy-D-manno-octulosonate biosynthesis; CMP-3-deoxy-D-manno-octulosonate from 3-deoxy-D-manno-octulosonate and CTP: step 1/1. It functions in the pathway bacterial outer membrane biogenesis; lipopolysaccharide biosynthesis. In terms of biological role, activates KDO (a required 8-carbon sugar) for incorporation into bacterial lipopolysaccharide in Gram-negative bacteria. The chain is 3-deoxy-manno-octulosonate cytidylyltransferase from Legionella pneumophila (strain Paris).